The sequence spans 91 residues: Small ribosomal subunit protein uS19 (91 aa).

Belongs to the universal ribosomal protein uS19 family.

Protein S19 forms a complex with S13 that binds strongly to the 16S ribosomal RNA. The sequence is that of Small ribosomal subunit protein uS19 from Leptothrix cholodnii (strain ATCC 51168 / LMG 8142 / SP-6) (Leptothrix discophora (strain SP-6)).